The chain runs to 365 residues: Phosphatidylcholine:ceramide cholinephosphotransferase 4 (365 aa).

Residues 1-44 are Cytoplasmic-facing; that stretch reads MISYPFFSLSPPGLVPPPMAVPPVEMYSGSFWNRMRKPLPLRTQ. The chain crosses the membrane as a helical span at residues 45-65; it reads VIRFTVVFVIVSFILAVALQI. Residues 66–92 are Lumenal-facing; that stretch reads THERMPDPKVTKPLPDLGFELLTKVPG. A helical membrane pass occupies residues 93–113; sequence MYVLADCCIGFLNILSVFTAF. The Cytoplasmic segment spans residues 114–165; that stretch reads KLYLLHRHCVGSGEPELPCNIPGVSRFFLSVWLCKENCRIELRNVHTIAWIR. A helical membrane pass occupies residues 166-186; that stretch reads FITSYALLLLFRSVVIVMTSL. Residues 187 to 229 are Lumenal-facing; that stretch reads PAPDDLCQDPPKIENPVKNVILTVLTAGGGSIHCGDLMYSGHT. H228 is a catalytic residue. Residues 230–250 form a helical membrane-spanning segment; sequence VILTLHLMFHWIYGAMVHWSF. Position 251 (R251) is a topological domain, cytoplasmic. Residues 252 to 272 traverse the membrane as a helical segment; that stretch reads PVVTVVAIFGYYCIVASRFHY. Catalysis depends on residues H271 and D275. The Lumenal segment spans residues 273 to 275; sequence TDD. The chain crosses the membrane as a helical span at residues 276 to 296; the sequence is VLVAIYLTIATFIAVGHNADG. Topologically, residues 297 to 365 are cytoplasmic; that stretch reads APWQLQLFIR…ALMFKCGAYV (69 aa).

It belongs to the sphingomyelin synthase family.

It is found in the golgi apparatus membrane. The catalysed reaction is an N-acylsphing-4-enine + a 1,2-diacyl-sn-glycero-3-phosphocholine = a sphingomyelin + a 1,2-diacyl-sn-glycerol. Functionally, bidirectional lipid cholinephosphotransferase capable of converting phosphatidylcholine (PC) and ceramide to sphingomyelin (SM) and diacylglycerol (DAG) and vice versa. Direction is dependent on the relative concentrations of DAG and ceramide as phosphocholine acceptors. Directly and specifically recognizes the choline head group on the substrate. Also requires two fatty chains on the choline-P donor molecule in order to be recognized efficiently as a substrate. Does not function strictly as a SM synthase. Essential for viability of the pathogenic bloodstream stage of this human protozoan parasite and, consequently, can be considered as potential drug target. The polypeptide is Phosphatidylcholine:ceramide cholinephosphotransferase 4 (Trypanosoma brucei brucei (strain 927/4 GUTat10.1)).